A 1160-amino-acid chain; its full sequence is Protein translocase subunit SecA (1160 aa).

ATP is bound by residues Q162 and G180–T184. Residues L342–E362 form a disordered region. Residues E344–G353 are compositionally biased toward acidic residues. ATP is bound at residue D726. Residues E1060–N1134 are disordered. Polar residues predominate over residues Q1074–S1083. The segment covering A1104 to Q1115 has biased composition (basic and acidic residues).

This sequence belongs to the SecA family. As to quaternary structure, monomer and homodimer. Part of the essential Sec protein translocation apparatus which comprises SecA, SecYEG and auxiliary proteins SecDF. Other proteins may also be involved.

Its subcellular location is the cell inner membrane. The protein localises to the cytoplasm. The catalysed reaction is ATP + H2O + cellular proteinSide 1 = ADP + phosphate + cellular proteinSide 2.. Functionally, part of the Sec protein translocase complex. Interacts with the SecYEG preprotein conducting channel. Has a central role in coupling the hydrolysis of ATP to the transfer of proteins into and across the cell membrane, serving as an ATP-driven molecular motor driving the stepwise translocation of polypeptide chains across the membrane. The sequence is that of Protein translocase subunit SecA from Salinibacter ruber (strain DSM 13855 / M31).